Consider the following 468-residue polypeptide: 3-isopropylmalate dehydratase large subunit (468 aa).

Cys345, Cys405, and Cys408 together coordinate [4Fe-4S] cluster.

Belongs to the aconitase/IPM isomerase family. LeuC type 1 subfamily. As to quaternary structure, heterodimer of LeuC and LeuD. The cofactor is [4Fe-4S] cluster.

The enzyme catalyses (2R,3S)-3-isopropylmalate = (2S)-2-isopropylmalate. Its pathway is amino-acid biosynthesis; L-leucine biosynthesis; L-leucine from 3-methyl-2-oxobutanoate: step 2/4. Catalyzes the isomerization between 2-isopropylmalate and 3-isopropylmalate, via the formation of 2-isopropylmaleate. The polypeptide is 3-isopropylmalate dehydratase large subunit (Oceanobacillus iheyensis (strain DSM 14371 / CIP 107618 / JCM 11309 / KCTC 3954 / HTE831)).